We begin with the raw amino-acid sequence, 547 residues long: Fimbria adhesin EcpD (547 aa).

The N-terminal stretch at 1-20 is a signal peptide; sequence MRVNLLIAMIIFALIWPATA.

The protein belongs to the EcpD/MatE family. As to quaternary structure, forms polymers. Interacts with EcpA.

It is found in the fimbrium. Part of the ecpRABCDE operon, which encodes the E.coli common pilus (ECP). ECP is found in both commensal and pathogenic strains and plays a dual role in early-stage biofilm development and host cell recognition. Tip pilus adhesin, which is required for assembly of EcpA into fibers. This Escherichia coli O127:H6 (strain E2348/69 / EPEC) protein is Fimbria adhesin EcpD (ecpD).